Here is a 267-residue protein sequence, read N- to C-terminus: Thiamine pyrophosphokinase 2 (267 aa).

Belongs to the thiamine pyrophosphokinase family. In terms of tissue distribution, expressed in leaves and at lower levels in flowers.

The protein resides in the cytoplasm. Its subcellular location is the cytosol. It carries out the reaction thiamine + ATP = thiamine diphosphate + AMP + H(+). It participates in cofactor biosynthesis; thiamine diphosphate biosynthesis; thiamine diphosphate from thiamine: step 1/1. Its function is as follows. Catalyzes the phosphorylation of thiamine to thiamine pyrophosphate (TPP). TPP is an active cofactor for enzymes involved in glycolysis and energy production. Plant leaves require high levels of TPP for photosynthesis and carbohydrate metabolism. The chain is Thiamine pyrophosphokinase 2 from Arabidopsis thaliana (Mouse-ear cress).